The sequence spans 248 residues: UPF0246 protein RAF_ORF0648 (248 aa).

The protein belongs to the UPF0246 family.

This chain is UPF0246 protein RAF_ORF0648, found in Rickettsia africae (strain ESF-5).